A 464-amino-acid polypeptide reads, in one-letter code: Serine protease PepD (464 aa).

The tract at residues 1–71 (MAKLARVVGL…TQYRQPYEAL (71 aa)) is disordered. The Cytoplasmic portion of the chain corresponds to 1 to 100 (MAKLARVVGL…GMVRQRPRAG (100 aa)). The span at 39–48 (QGQQQTYSQQ) shows a compositional bias: low complexity. A helical transmembrane segment spans residues 101-121 (MLAIGAVTIAVVSAGIGGAAA). The Periplasmic segment spans residues 122–464 (SLVGFNRAPA…VQVTLGKAEQ (343 aa)). Active-site charge relay system residues include H197, D236, and S317. Residues 368–449 (LISTGKASHA…TVALTFQDPS (82 aa)) enclose the PDZ domain.

This sequence belongs to the peptidase S1C family. In terms of assembly, homotrimer. Interacts with numerous proteins, including the 35 kDa antigen PspA.

The protein resides in the cell inner membrane. It is found in the secreted. The protein localises to the cell wall. It catalyses the reaction Acts on substrates that are at least partially unfolded. The cleavage site P1 residue is normally between a pair of hydrophobic residues, such as Val-|-Val.. Its activity is regulated as follows. Probably regulates its own activity by autocleavage, which removes the PDZ domain. Inhibited by the serine protease inhibitor diisopropylfluorophosphate (DFP). Inhibited by fluoroquinolone such as ciprofloxacin, moxifloxacin and ofloxacin and their analogs. Its function is as follows. Required for virulence. Acts both as a protease, which degrades and/or refolds damaged substrate targets, and as a chaperone. Plays an important role in the stress response network mediated through the two-component regulatory system MprAB and SigE signaling networks. May utilize its PDZ domain to recognize and process misfolded proteins at the cell membrane, leading to activation of the MprAB and SigE signaling pathways and subsequent establishment of a positive feedback loop that facilitates bacterial adaptation. Interacts with and potentially cleaves several proteins, including the 35 kDa antigen PspA. Proteolytic cleavage of PspA may help to maintain cell envelope homeostasis in Mycobacterium and regulate specific stress response pathways during periods of extracytoplasmic stress. In vitro, exhibits proteolytic activity against the artificial substrate beta-casein. The polypeptide is Serine protease PepD (Mycobacterium tuberculosis (strain ATCC 25618 / H37Rv)).